Here is an 867-residue protein sequence, read N- to C-terminus: Pentatricopeptide repeat-containing protein At2g39230, mitochondrial (867 aa).

The transit peptide at 1–49 (MTTFMVSKRFRPPIFLHRFINPKPISSQTRFLHPPDNQSRDISDSTTET) directs the protein to the mitochondrion. The segment at 27–74 (SQTRFLHPPDNQSRDISDSTTETISTLEFPHKTSVPNHSPLTSTSETE) is disordered. Residues 60–72 (SVPNHSPLTSTSE) are compositionally biased toward polar residues. PPR repeat units follow at residues 168–202 (TPRA…KVVP), 203–237 (FVPY…GVAG), 238–272 (DNVT…GAEP), 273–307 (DGLL…LGVP), 309–343 (SQET…GIPM), 344–378 (SVIA…GLAP), 379–413 (DKVM…RIAP), 414–444 (SSVL…SFES), 448–482 (HGFM…GIEP), 483–517 (NVVF…GLEP), 518–552 (NNFT…NFEA), 553–588 (NEVI…RYSM), 589–623 (SCTS…GKSP), 624–658 (NVVT…ELKL), 659–693 (DLPA…GLMP), 694–728 (NVSV…GISC), 729–763 (DLFT…GIVP), 764–798 (DEIL…DVTP), and 799–833 (NVLL…GIVH).

This sequence belongs to the PPR family. P subfamily. In terms of tissue distribution, expressed in lateral organ junctions and shoot apical meristem (SAM).

Its subcellular location is the mitochondrion. In terms of biological role, involved in lateral organ development and boundary demarcation. The polypeptide is Pentatricopeptide repeat-containing protein At2g39230, mitochondrial (LOJ) (Arabidopsis thaliana (Mouse-ear cress)).